We begin with the raw amino-acid sequence, 405 residues long: uncharacterized protein (405 aa).

The first 34 residues, 1-34 (MNKFLKYFLILLALVLIVVPIVFATLLFKTSQDA), serve as a signal peptide directing secretion. Residues 348–359 (EQNDTTDKDKTS) are compositionally biased toward basic and acidic residues. The interval 348–405 (EQNDTTDKDKTSNENSDSTNNSDSSNQQQPATDQNSNQNQGGTQQAPQASNNQNGVVN) is disordered. Low complexity-rich tracts occupy residues 360 to 373 (NENS…DSSN) and 381 to 392 (QNSNQNQGGTQQ). Residues 393-405 (APQASNNQNGVVN) are compositionally biased toward polar residues.

This sequence belongs to the LytR/CpsA/Psr (LCP) family.

This is an uncharacterized protein from Staphylococcus aureus (strain NCTC 8325 / PS 47).